We begin with the raw amino-acid sequence, 499 residues long: Glucose-6-phosphate exchanger SLC37A2 (499 aa).

A helical transmembrane segment spans residues 21–40; it reads YRGFIIVMTFLFYTCYHMSR. Asn53, Asn62, and Asn66 each carry an N-linked (GlcNAc...) asparagine glycan. A run of 11 helical transmembrane segments spans residues 86 to 106, 116 to 136, 138 to 158, 187 to 207, 208 to 228, 302 to 322, 334 to 354, 362 to 382, 391 to 411, 434 to 454, and 458 to 478; these read GSLDTAFLVSYAIGMFFSGIF, LSGGMIICGIFTSFMGLGYYW, IHALWYYILFQILNGLAQTTG, AVGNILGSLIAGAFVSTAWGL, SFIVPGIIIAAFGIFCFFFLV, LCLLFAKLVSYTFLYWLPLYI, GDLSTLFDVGGIIGGILAGGI, AITCTIMLILTAPMLFIYNYL, VAMLIVCGILVNGPYSLITTA, AIIDGSGSIGAALGPSLAGVL, and GWNYVFYMLIAADICACLLLV.

It belongs to the major facilitator superfamily. Organophosphate:Pi antiporter (OPA) (TC 2.A.1.4) family.

It is found in the endoplasmic reticulum membrane. The enzyme catalyses D-glucose 6-phosphate(in) + phosphate(out) = D-glucose 6-phosphate(out) + phosphate(in). Its function is as follows. Inorganic phosphate and glucose-6-phosphate antiporter. May transport cytoplasmic glucose-6-phosphate into the lumen of the endoplasmic reticulum and translocate inorganic phosphate into the opposite direction. This is Glucose-6-phosphate exchanger SLC37A2 from Xenopus tropicalis (Western clawed frog).